The chain runs to 185 residues: Elongation factor P (185 aa).

This sequence belongs to the elongation factor P family.

The protein resides in the cytoplasm. It functions in the pathway protein biosynthesis; polypeptide chain elongation. Involved in peptide bond synthesis. Stimulates efficient translation and peptide-bond synthesis on native or reconstituted 70S ribosomes in vitro. Probably functions indirectly by altering the affinity of the ribosome for aminoacyl-tRNA, thus increasing their reactivity as acceptors for peptidyl transferase. The sequence is that of Elongation factor P from Bacillus velezensis (strain DSM 23117 / BGSC 10A6 / LMG 26770 / FZB42) (Bacillus amyloliquefaciens subsp. plantarum).